Consider the following 424-residue polypeptide: Enolase (424 aa).

Gln-162 contributes to the (2R)-2-phosphoglycerate binding site. Catalysis depends on Glu-204, which acts as the Proton donor. Residues Asp-241, Glu-284, and Asp-311 each contribute to the Mg(2+) site. Lys-336, Arg-365, Ser-366, and Lys-387 together coordinate (2R)-2-phosphoglycerate. Lys-336 (proton acceptor) is an active-site residue.

Belongs to the enolase family. It depends on Mg(2+) as a cofactor.

The protein localises to the cytoplasm. The protein resides in the secreted. It is found in the cell surface. The catalysed reaction is (2R)-2-phosphoglycerate = phosphoenolpyruvate + H2O. The protein operates within carbohydrate degradation; glycolysis; pyruvate from D-glyceraldehyde 3-phosphate: step 4/5. Its function is as follows. Catalyzes the reversible conversion of 2-phosphoglycerate (2-PG) into phosphoenolpyruvate (PEP). It is essential for the degradation of carbohydrates via glycolysis. This is Enolase from Rhizobium johnstonii (strain DSM 114642 / LMG 32736 / 3841) (Rhizobium leguminosarum bv. viciae).